Reading from the N-terminus, the 261-residue chain is MSDILDKIIAVKREEIAAALESAPLEELKVQASARDSRDFVGALRDKHAAGHAAVIAEVKKASPSKGVLREHFVPADIARSYAQHGAACLSVLTDERFFQGSARYLEQARAACALPVLRKDFIVDAYQVLEARAMGADAILLIAAALDTPLMIDLEAYAHSLGLAVLVEVHNRSELDEALKLKTPLVGINNRNLRTFETTIDTTLGMLDAIPDDRIVVTESGILSRADVERMEAAGVHTFLVGEAFMRAENPGAELARMFF.

The protein belongs to the TrpC family.

The catalysed reaction is 1-(2-carboxyphenylamino)-1-deoxy-D-ribulose 5-phosphate + H(+) = (1S,2R)-1-C-(indol-3-yl)glycerol 3-phosphate + CO2 + H2O. It participates in amino-acid biosynthesis; L-tryptophan biosynthesis; L-tryptophan from chorismate: step 4/5. The chain is Indole-3-glycerol phosphate synthase from Burkholderia pseudomallei (strain 668).